The primary structure comprises 329 residues: Ig gamma-2 chain C region (329 aa).

Intrachain disulfides connect C28–C79, C142–C202, and C248–C308. The N-linked (GlcNAc...) asparagine glycan is linked to N178.

It localises to the secreted. The chain is Ig gamma-2 chain C region from Cavia porcellus (Guinea pig).